Consider the following 263-residue polypeptide: Tryptophan synthase alpha chain (263 aa).

Catalysis depends on proton acceptor residues Glu-49 and Asp-60.

It belongs to the TrpA family. As to quaternary structure, tetramer of two alpha and two beta chains.

The catalysed reaction is (1S,2R)-1-C-(indol-3-yl)glycerol 3-phosphate + L-serine = D-glyceraldehyde 3-phosphate + L-tryptophan + H2O. Its pathway is amino-acid biosynthesis; L-tryptophan biosynthesis; L-tryptophan from chorismate: step 5/5. Functionally, the alpha subunit is responsible for the aldol cleavage of indoleglycerol phosphate to indole and glyceraldehyde 3-phosphate. This chain is Tryptophan synthase alpha chain, found in Cereibacter sphaeroides (strain KD131 / KCTC 12085) (Rhodobacter sphaeroides).